A 305-amino-acid polypeptide reads, in one-letter code: Suppressor of activated egl-4 protein 2 (305 aa).

A disordered region spans residues 138–168 (KRGYESDSSDVSGVSHCSDAKRRRGRPRKDE). Positions 158 to 170 (KRRRGRPRKDEEA) form a DNA-binding region, a.T hook.

As to quaternary structure, interacts with phosphorylated egl-4. May interact with itself. May be a component of a histone deacetylase complex containing saeg-2, saeg-1 and hda-2. In terms of tissue distribution, ubiquitously expressed.

It localises to the nucleus. In terms of biological role, as a likely component of a histone deacetylase complex, together with saeg-1 and hda-2, functions downstream of the cAMP-dependent kinase egl-4 to regulate the expression of genes required for egg-laying and foraging. The polypeptide is Suppressor of activated egl-4 protein 2 (Caenorhabditis elegans).